The primary structure comprises 202 residues: ATP-dependent Clp protease proteolytic subunit (202 aa).

The active-site Nucleophile is the serine 106. Residue histidine 131 is part of the active site.

This sequence belongs to the peptidase S14 family. In terms of assembly, fourteen ClpP subunits assemble into 2 heptameric rings which stack back to back to give a disk-like structure with a central cavity, resembling the structure of eukaryotic proteasomes.

Its subcellular location is the cytoplasm. The enzyme catalyses Hydrolysis of proteins to small peptides in the presence of ATP and magnesium. alpha-casein is the usual test substrate. In the absence of ATP, only oligopeptides shorter than five residues are hydrolyzed (such as succinyl-Leu-Tyr-|-NHMec, and Leu-Tyr-Leu-|-Tyr-Trp, in which cleavage of the -Tyr-|-Leu- and -Tyr-|-Trp bonds also occurs).. Cleaves peptides in various proteins in a process that requires ATP hydrolysis. Has a chymotrypsin-like activity. Plays a major role in the degradation of misfolded proteins. The polypeptide is ATP-dependent Clp protease proteolytic subunit (Shewanella baltica (strain OS223)).